Consider the following 334-residue polypeptide: Transcription initiation factor IIB (334 aa).

A TFIIB-type zinc finger spans residues 34–65; the sequence is TESVCPECKSRQLVHDYERAELVCQNCGLVID. Zn(2+)-binding residues include C38, C41, C57, and C60. A run of 2 repeats spans residues 151–234 and 245–326.

This sequence belongs to the TFIIB family.

Its function is as follows. Stabilizes TBP binding to an archaeal box-A promoter. Also responsible for recruiting RNA polymerase II to the pre-initiation complex (DNA-TBP-TFIIB). The protein is Transcription initiation factor IIB of Methanosphaerula palustris (strain ATCC BAA-1556 / DSM 19958 / E1-9c).